Reading from the N-terminus, the 205-residue chain is Golgi apparatus membrane protein TVP23 homolog B (205 aa).

Met-1 carries the N-acetylmethionine modification. Acidic residues predominate over residues 1–21; it reads MLSQDSNDDTEDVSLFDAEEE. The disordered stretch occupies residues 1-27; it reads MLSQDSNDDTEDVSLFDAEEETTNRPR. 4 helical membrane-spanning segments follow: residues 34 to 53, 54 to 72, 126 to 146, and 152 to 172; these read PVASFFHLFFRVSAVVVYLL, CELLSSSFIACMVTIILLL, IFWLGLIACPVLWVIFAFSAL, and KWLAVVIMGVVLQGANLYGYI.

This sequence belongs to the TVP23 family.

It is found in the membrane. This chain is Golgi apparatus membrane protein TVP23 homolog B (Tvp23b), found in Mus musculus (Mouse).